Consider the following 494-residue polypeptide: DnaJ homolog subfamily C member 7 (494 aa).

An N-acetylalanine modification is found at alanine 2. TPR repeat units lie at residues 28–61 (AETF…CPKN), 62–95 (ASYY…DDSF), 96–129 (VRGH…DHKN), 142–175 (VMEY…APAC), 177–209 (RFKI…DSTN), 210–243 (ADAL…APDH), 256–289 (LKAK…DPNN), 294–327 (AKLY…DDTY), and 328–361 (IKAY…EKTK). The region spanning 381 to 451 (DYYKILGVDK…KKKTRYDSGQ (71 aa)) is the J domain. Position 393 is a phosphoserine (serine 393).

In terms of assembly, associates with complexes containing chaperones HSP70 and HSP90. Interacts with the GAP domain of NF1. Interacts with HSP90AA1. Interacts with HSPA1A/B; the interaction is enhanced by ATP. Interacts with HSP90AB1. Interacts with PGR. Interacts with RAD9A; the interaction is interrupted by UV and heat shock treatments. Interacts with HUS1 and RAD1. Interacts with NR1I3. The DNAJC7-NR1I3 complex may also include HSP90. Interacts with HSPA8.

It is found in the cytoplasm. The protein resides in the nucleus. Its subcellular location is the cytoskeleton. Functionally, acts as a co-chaperone regulating the molecular chaperones HSP70 and HSP90 in folding of steroid receptors, such as the glucocorticoid receptor and the progesterone receptor. Proposed to act as a recycling chaperone by facilitating the return of chaperone substrates to early stages of chaperoning if further folding is required. In vitro, induces ATP-independent dissociation of HSP90 but not of HSP70 from the chaperone-substrate complexes. Recruits NR1I3 to the cytoplasm. This Homo sapiens (Human) protein is DnaJ homolog subfamily C member 7 (DNAJC7).